A 468-amino-acid polypeptide reads, in one-letter code: Argininosuccinate lyase (468 aa).

Belongs to the lyase 1 family. Argininosuccinate lyase subfamily.

The protein resides in the cytoplasm. The enzyme catalyses 2-(N(omega)-L-arginino)succinate = fumarate + L-arginine. The protein operates within amino-acid biosynthesis; L-arginine biosynthesis; L-arginine from L-ornithine and carbamoyl phosphate: step 3/3. This is Argininosuccinate lyase from Methanothermobacter thermautotrophicus (strain ATCC 29096 / DSM 1053 / JCM 10044 / NBRC 100330 / Delta H) (Methanobacterium thermoautotrophicum).